Consider the following 98-residue polypeptide: Defensin (98 aa).

3 disulfide bridges follow: Cys-61/Cys-88, Cys-74/Cys-94, and Cys-78/Cys-96.

It belongs to the invertebrate defensin family. Type 1 subfamily.

This is Defensin from Mamestra brassicae (Cabbage moth).